Here is a 131-residue protein sequence, read N- to C-terminus: Methylglyoxal synthase (131 aa).

The MGS-like domain maps to Met-1–Lys-131. Substrate contacts are provided by residues His-8, Lys-12, Thr-34–Thr-37, and Ser-54–Gly-55. Asp-60 functions as the Proton donor/acceptor in the catalytic mechanism. His-87 provides a ligand contact to substrate.

Belongs to the methylglyoxal synthase family.

The catalysed reaction is dihydroxyacetone phosphate = methylglyoxal + phosphate. In terms of biological role, catalyzes the formation of methylglyoxal from dihydroxyacetone phosphate. This is Methylglyoxal synthase from Bacillus cereus (strain ATCC 14579 / DSM 31 / CCUG 7414 / JCM 2152 / NBRC 15305 / NCIMB 9373 / NCTC 2599 / NRRL B-3711).